The following is a 313-amino-acid chain: Porphobilinogen deaminase (313 aa).

C241 bears the S-(dipyrrolylmethanemethyl)cysteine mark.

This sequence belongs to the HMBS family. Monomer. Requires dipyrromethane as cofactor.

It carries out the reaction 4 porphobilinogen + H2O = hydroxymethylbilane + 4 NH4(+). It functions in the pathway porphyrin-containing compound metabolism; protoporphyrin-IX biosynthesis; coproporphyrinogen-III from 5-aminolevulinate: step 2/4. In terms of biological role, tetrapolymerization of the monopyrrole PBG into the hydroxymethylbilane pre-uroporphyrinogen in several discrete steps. The sequence is that of Porphobilinogen deaminase from Idiomarina loihiensis (strain ATCC BAA-735 / DSM 15497 / L2-TR).